Reading from the N-terminus, the 418-residue chain is Dual-specificity RNA methyltransferase RlmN (418 aa).

Positions 1–21 (MADTSLMPIPGQVDPVPAPRD) are disordered. The active-site Proton acceptor is the E122. The region spanning 128 to 383 (DADRGTLCVS…APVRTPRGRD (256 aa)) is the Radical SAM core domain. A disulfide bond links C135 and C388. C142, C146, and C149 together coordinate [4Fe-4S] cluster. S-adenosyl-L-methionine contacts are provided by residues 212 to 213 (GE), S244, 266 to 268 (SLH), and N345. Catalysis depends on C388, which acts as the S-methylcysteine intermediate. A disordered region spans residues 393 to 418 (TAAQKKSRAERDREAAAEAEAAASQA). Over residues 399–408 (SRAERDREAA) the composition is skewed to basic and acidic residues.

This sequence belongs to the radical SAM superfamily. RlmN family. It depends on [4Fe-4S] cluster as a cofactor.

The protein resides in the cytoplasm. It carries out the reaction adenosine(2503) in 23S rRNA + 2 reduced [2Fe-2S]-[ferredoxin] + 2 S-adenosyl-L-methionine = 2-methyladenosine(2503) in 23S rRNA + 5'-deoxyadenosine + L-methionine + 2 oxidized [2Fe-2S]-[ferredoxin] + S-adenosyl-L-homocysteine. The enzyme catalyses adenosine(37) in tRNA + 2 reduced [2Fe-2S]-[ferredoxin] + 2 S-adenosyl-L-methionine = 2-methyladenosine(37) in tRNA + 5'-deoxyadenosine + L-methionine + 2 oxidized [2Fe-2S]-[ferredoxin] + S-adenosyl-L-homocysteine. Functionally, specifically methylates position 2 of adenine 2503 in 23S rRNA and position 2 of adenine 37 in tRNAs. m2A2503 modification seems to play a crucial role in the proofreading step occurring at the peptidyl transferase center and thus would serve to optimize ribosomal fidelity. The polypeptide is Dual-specificity RNA methyltransferase RlmN (Erythrobacter litoralis (strain HTCC2594)).